A 612-amino-acid chain; its full sequence is Indole-3-acetic acid-amido synthetase GH3.5 (612 aa).

The protein belongs to the IAA-amido conjugating enzyme family.

Functionally, catalyzes the synthesis of indole-3-acetic acid (IAA)-amino acid conjugates, providing a mechanism for the plant to cope with the presence of excess auxin. Strongly reactive with Glu, Gln, Trp, Asp, Ala, Leu, Phe, Gly, Tyr, Met, Ile and Val. Little or no product formation with His, Ser, Thr, Arg, Lys, or Cys. Also active on pyruvic and butyric acid analogs of IAA, PAA and the synthetic auxin naphthaleneacetic acid (NAA). The two chlorinated synthetic auxin herbicides 2,4-D and 3,6-dichloro-o-anisic acid (dicamba) cannot be used as substrates. The sequence is that of Indole-3-acetic acid-amido synthetase GH3.5 (GH3.5) from Arabidopsis thaliana (Mouse-ear cress).